We begin with the raw amino-acid sequence, 198 residues long: NAD(P)H dehydrogenase (quinone) (198 aa).

Residues 4–190 (VLVLYYSAYG…EGAKYQGAHV (187 aa)) form the Flavodoxin-like domain. Residues 10-15 (SAYGHI) and 78-80 (TRF) contribute to the FMN site. Residue tyrosine 12 participates in NAD(+) binding. Residue tryptophan 98 coordinates substrate. Residues 113–119 (SSATQHG) and histidine 134 contribute to the FMN site.

It belongs to the WrbA family. FMN serves as cofactor.

The catalysed reaction is a quinone + NADH + H(+) = a quinol + NAD(+). It carries out the reaction a quinone + NADPH + H(+) = a quinol + NADP(+). In Rhizobium johnstonii (strain DSM 114642 / LMG 32736 / 3841) (Rhizobium leguminosarum bv. viciae), this protein is NAD(P)H dehydrogenase (quinone).